The following is a 508-amino-acid chain: Photosystem II CP47 reaction center protein (508 aa).

6 helical membrane passes run 21-36 (AVHI…WAGS), 101-115 (IVFS…IWHW), 140-156 (GIHL…FGAF), 203-218 (IAAG…FHLS), 237-252 (VLSS…AFIV), and 457-472 (TFAL…HGAR).

It belongs to the PsbB/PsbC family. PsbB subfamily. As to quaternary structure, PSII is composed of 1 copy each of membrane proteins PsbA, PsbB, PsbC, PsbD, PsbE, PsbF, PsbH, PsbI, PsbJ, PsbK, PsbL, PsbM, PsbT, PsbX, PsbY, PsbZ, Psb30/Ycf12, at least 3 peripheral proteins of the oxygen-evolving complex and a large number of cofactors. It forms dimeric complexes. It depends on Binds multiple chlorophylls. PSII binds additional chlorophylls, carotenoids and specific lipids. as a cofactor.

Its subcellular location is the plastid. It is found in the chloroplast thylakoid membrane. Its function is as follows. One of the components of the core complex of photosystem II (PSII). It binds chlorophyll and helps catalyze the primary light-induced photochemical processes of PSII. PSII is a light-driven water:plastoquinone oxidoreductase, using light energy to abstract electrons from H(2)O, generating O(2) and a proton gradient subsequently used for ATP formation. In Cryptomeria japonica (Japanese cedar), this protein is Photosystem II CP47 reaction center protein.